We begin with the raw amino-acid sequence, 639 residues long: Protein artemis (639 aa).

3 disordered regions span residues 450–496 (MDCT…LTSS), 515–570 (SELE…SQVD), and 590–617 (EAAELKSDSQVSSDFELPPTPGSKVPQP). The span at 454-466 (ESNDDDDDEDDAA) shows a compositional bias: acidic residues. Residues 518–537 (ENSQNTQTLSTENTASQSPE) show a composition bias toward polar residues. A compositionally biased stretch (low complexity) spans 548–560 (VHMSSSQSTHISD).

It belongs to the DNA repair metallo-beta-lactamase (DRMBL) family.

It localises to the nucleus. May have a role in the processing of DNA double strand breaks (DSBs) prior to their repair by the non homologous end joining (NHEJ) pathway. Probably exhibits both exonuclease and endonuclease activity. This is Protein artemis (dclre1c) from Danio rerio (Zebrafish).